A 663-amino-acid polypeptide reads, in one-letter code: Zinc finger protein GLI2 (663 aa).

The segment at 159-186 is disordered; the sequence is ISSNSNCISDSSQSKQSSESAVSSTVNP. Over residues 160-182 the composition is skewed to low complexity; sequence SSNSNCISDSSQSKQSSESAVSS. 5 consecutive C2H2-type zinc fingers follow at residues 234-259, 267-294, 300-324, 330-355, and 361-386; these read TNCH…NNDH, FVCR…MRRH, HKCT…LRSH, YVCE…NRTH, and YVCK…KTVH. Disordered stretches follow at residues 374–440, 452–481, 544–578, and 619–663; these read DPSS…MEDC, VMCQ…DSGV, CSWV…SRTL, and SGIS…DIKL. Residues 386–402 show a composition bias toward basic and acidic residues; that stretch reads HGPDAHVTKKQRNDVHP. The span at 456 to 473 shows a compositional bias: low complexity; sequence SSPGGQSSCSSEPSPLGS. Polar residues-rich tracts occupy residues 563–578 and 619–647; these read GNGS…SRTL and SGIS…SSAD.

It belongs to the GLI C2H2-type zinc-finger protein family.

It is found in the nucleus. The protein resides in the cytoplasm. The protein localises to the cell projection. Its subcellular location is the cilium. Functions as a transcription regulator in the hedgehog (Hh) pathway. Functions as a transcriptional activator. May also function as transcriptional repressor. Binds to the DNA sequence 5'-GAACCACCCA-3'. Is involved in the smoothened (SHH) signaling pathway. Required for normal skeleton development. This chain is Zinc finger protein GLI2, found in Gallus gallus (Chicken).